The primary structure comprises 251 residues: Probable transcriptional regulatory protein AAur_2300 (251 aa).

This sequence belongs to the TACO1 family.

It localises to the cytoplasm. This Paenarthrobacter aurescens (strain TC1) protein is Probable transcriptional regulatory protein AAur_2300.